The chain runs to 453 residues: Chromosomal replication initiator protein DnaA (453 aa).

The segment at 1–79 (MKSLIQEKWN…KTAIAEVINQ (79 aa)) is domain I, interacts with DnaA modulators. The domain II stretch occupies residues 79-111 (QDFEIEFVLLSQTKAEEKVQTQAPNKIKNESLS). Residues 112–330 (YLNPRYTFDT…GALTKIVALS (219 aa)) are domain III, AAA+ region. 4 residues coordinate ATP: Gly-156, Gly-158, Lys-159, and Thr-160. A domain IV, binds dsDNA region spans residues 331–453 (RLKKKEVDVI…VLIKKINPTP (123 aa)).

Belongs to the DnaA family. As to quaternary structure, oligomerizes as a right-handed, spiral filament on DNA at oriC.

The protein resides in the cytoplasm. Functionally, plays an essential role in the initiation and regulation of chromosomal replication. ATP-DnaA binds to the origin of replication (oriC) to initiate formation of the DNA replication initiation complex once per cell cycle. Binds the DnaA box (a 9 base pair repeat at the origin) and separates the double-stranded (ds)DNA. Forms a right-handed helical filament on oriC DNA; dsDNA binds to the exterior of the filament while single-stranded (ss)DNA is stabiized in the filament's interior. The ATP-DnaA-oriC complex binds and stabilizes one strand of the AT-rich DNA unwinding element (DUE), permitting loading of DNA polymerase. After initiation quickly degrades to an ADP-DnaA complex that is not apt for DNA replication. Binds acidic phospholipids. This is Chromosomal replication initiator protein DnaA from Lachnoclostridium phytofermentans (strain ATCC 700394 / DSM 18823 / ISDg) (Clostridium phytofermentans).